Here is a 360-residue protein sequence, read N- to C-terminus: Histidinol-phosphate aminotransferase (360 aa).

Position 213 is an N6-(pyridoxal phosphate)lysine (lysine 213).

This sequence belongs to the class-II pyridoxal-phosphate-dependent aminotransferase family. Histidinol-phosphate aminotransferase subfamily. In terms of assembly, homodimer. The cofactor is pyridoxal 5'-phosphate.

It carries out the reaction L-histidinol phosphate + 2-oxoglutarate = 3-(imidazol-4-yl)-2-oxopropyl phosphate + L-glutamate. Its pathway is amino-acid biosynthesis; L-histidine biosynthesis; L-histidine from 5-phospho-alpha-D-ribose 1-diphosphate: step 7/9. The protein is Histidinol-phosphate aminotransferase of Baumannia cicadellinicola subsp. Homalodisca coagulata.